The chain runs to 109 residues: Spermidine export protein MdtI (109 aa).

A run of 4 helical transmembrane segments spans residues 6 to 26 (WWHA…NILL), 36 to 56 (WMGI…AQAV), 63 to 83 (IAYA…GWIM), and 88 to 108 (LNYK…MIKM).

The protein belongs to the drug/metabolite transporter (DMT) superfamily. Small multidrug resistance (SMR) (TC 2.A.7.1) family. MdtI subfamily. As to quaternary structure, forms a complex with MdtJ.

The protein resides in the cell inner membrane. Catalyzes the excretion of spermidine. This chain is Spermidine export protein MdtI, found in Photorhabdus laumondii subsp. laumondii (strain DSM 15139 / CIP 105565 / TT01) (Photorhabdus luminescens subsp. laumondii).